The following is a 246-amino-acid chain: 1-(5-phosphoribosyl)-5-[(5-phosphoribosylamino)methylideneamino] imidazole-4-carboxamide isomerase (246 aa).

Catalysis depends on D8, which acts as the Proton acceptor. D131 functions as the Proton donor in the catalytic mechanism.

This sequence belongs to the HisA/HisF family.

The protein resides in the cytoplasm. It carries out the reaction 1-(5-phospho-beta-D-ribosyl)-5-[(5-phospho-beta-D-ribosylamino)methylideneamino]imidazole-4-carboxamide = 5-[(5-phospho-1-deoxy-D-ribulos-1-ylimino)methylamino]-1-(5-phospho-beta-D-ribosyl)imidazole-4-carboxamide. The protein operates within amino-acid biosynthesis; L-histidine biosynthesis; L-histidine from 5-phospho-alpha-D-ribose 1-diphosphate: step 4/9. The polypeptide is 1-(5-phosphoribosyl)-5-[(5-phosphoribosylamino)methylideneamino] imidazole-4-carboxamide isomerase (Delftia acidovorans (strain DSM 14801 / SPH-1)).